Reading from the N-terminus, the 470-residue chain is Acetyl-CoA decarbonylase/synthase complex subunit gamma 2 (470 aa).

The 4Fe-4S domain occupies 1 to 60; sequence MKINSPLEAYKYLPQTNCGECGQPTCMAFASTLIDRSGKTTDCPPLIKEKKFAKKLAELD. The [4Fe-4S] cluster site is built by C18, C21, C26, and C43.

As to quaternary structure, heterodimer of delta and gamma chains. The ACDS complex is made up of alpha, epsilon, beta, gamma and delta chains with a probable stoichiometry of (alpha(2)epsilon(2))(4)-beta(8)-(gamma(1)delta(1))(8). The cofactor is corrinoid. It depends on [4Fe-4S] cluster as a cofactor.

The catalysed reaction is 5,6,7,8-tetrahydrosarcinapterin + methyl-Co(III)-[corrinoid Fe-S protein] = 5-methyltetrahydrosarcinapterin + Co(I)-[corrinoid Fe-S protein] + H(+). Its pathway is one-carbon metabolism; methanogenesis from acetate. Its function is as follows. Part of a complex that catalyzes the reversible cleavage of acetyl-CoA, allowing growth on acetate as sole source of carbon and energy. The chain is Acetyl-CoA decarbonylase/synthase complex subunit gamma 2 from Methanosarcina mazei (strain ATCC BAA-159 / DSM 3647 / Goe1 / Go1 / JCM 11833 / OCM 88) (Methanosarcina frisia).